The primary structure comprises 348 residues: MEQFFWSYVWPALIMVGQSLLLLVCLLVAIAFLLLADRKVWAAVQLRRGPNVVGPFGLFQSFADLLKFILKEPVIPAGANKAVFLLAPLVAVTLALATYAVIPFADGWVVANINVGILYIFAISSLEVYGIIMGGWASNSKYPFLGALRSAAQMVSYEVSIGLVIVTVLLCVGSLNLTDIVLAQRTGLGTMMGLPASFLDWHWLSLFPMFIVFFISGLAETNRPPFDLPEAESELVAGHMVEYGSTPYMMFMLGEYAAIVLICCLTTILFLGGWLPIVDVWFLNWVPGIVWFALKGCMVFFMIALTKAFVPRYRYDQLMRLGWKVFLPLSLAMVVIVAFVLKLTGWAG.

A run of 9 helical transmembrane segments spans residues 13-33, 50-70, 82-102, 115-135, 161-181, 198-218, 258-278, 285-305, and 321-341; these read LIMVGQSLLLLVCLLVAIAFL, PNVVGPFGLFQSFADLLKFIL, AVFLLAPLVAVTLALATYAVI, VGILYIFAISSLEVYGIIMGG, IGLVIVTVLLCVGSLNLTDIV, FLDWHWLSLFPMFIVFFISGL, AIVLICCLTTILFLGGWLPIV, WVPGIVWFALKGCMVFFMIAL, and LGWKVFLPLSLAMVVIVAFVL.

This sequence belongs to the complex I subunit 1 family. In terms of assembly, NDH-1 is composed of 14 different subunits. Subunits NuoA, H, J, K, L, M, N constitute the membrane sector of the complex.

It localises to the cell inner membrane. It carries out the reaction a quinone + NADH + 5 H(+)(in) = a quinol + NAD(+) + 4 H(+)(out). NDH-1 shuttles electrons from NADH, via FMN and iron-sulfur (Fe-S) centers, to quinones in the respiratory chain. The immediate electron acceptor for the enzyme in this species is believed to be ubiquinone. Couples the redox reaction to proton translocation (for every two electrons transferred, four hydrogen ions are translocated across the cytoplasmic membrane), and thus conserves the redox energy in a proton gradient. This subunit may bind ubiquinone. In Agrobacterium fabrum (strain C58 / ATCC 33970) (Agrobacterium tumefaciens (strain C58)), this protein is NADH-quinone oxidoreductase subunit H.